The following is a 249-amino-acid chain: PF03932 family protein CutC (249 aa).

It belongs to the CutC family.

It is found in the cytoplasm. The chain is PF03932 family protein CutC from Bacteroides thetaiotaomicron (strain ATCC 29148 / DSM 2079 / JCM 5827 / CCUG 10774 / NCTC 10582 / VPI-5482 / E50).